Reading from the N-terminus, the 540-residue chain is Cytochrome P450 monooxygenase ORF5 (540 aa).

The helical transmembrane segment at tyrosine 48 to alanine 68 threads the bilayer. 2 N-linked (GlcNAc...) asparagine glycosylation sites follow: asparagine 376 and asparagine 460. Cysteine 483 contacts heme.

It belongs to the cytochrome P450 family. Heme is required as a cofactor.

It is found in the membrane. It functions in the pathway sesquiterpene biosynthesis. Functionally, cytochrome P450 monooxygenase; part of the gene cluster that mediates the biosynthesis of PR-toxin, a bicyclic sesquiterpene belonging to the eremophilane class and acting as a mycotoxin. The first step of the pathway is catalyzed by the aristolochene synthase which performs the cyclization of trans,trans-farnesyl diphosphate (FPP) to the bicyclic sesquiterpene aristolochene. Following the formation of aristolochene, the non-oxygenated aristolochene is converted to the trioxygenated intermediate eremofortin B, via 7-epi-neopetasone. This conversion appears to involve three enzymes, a hydroxysterol oxidase-like enzyme, the quinone-oxidase prx3 that forms the quinone-type-structure in the bicyclic nucleus of aristolochene with the C8-oxo group and the C-3 hydroxyl group, and the P450 monooxygenase ORF6 that introduces the epoxide at the double bond between carbons 1 and 2. No monoxy or dioxy-intermediates have been reported to be released to the broth, so these three early oxidative reactions may be coupled together. Eremofortin B is further oxidized by another P450 monooxygenase, that introduces a second epoxide between carbons 7 and 11 prior to acetylation to eremofortin A by the acetyltransferase ORF8. The second epoxidation may be performed by a second P450 monooxygenase. After the acetylation step, eremofortin A is converted to eremofortin C and then to PR-toxin. First the conversion of eremofortin A to eremofortin C proceeds by oxidation of the side chain of the molecule at C-12 and is catalyzed by the short-chain oxidoreductase prx1. The cytochrome P450 monooxygenase ORF6 is probably also involved in this step. The primary alcohol formed at C-12 is finally oxidized by the short-chain alcohol dehydrogenase prx4 that forms PR-toxin. This Penicillium roqueforti (strain FM164) protein is Cytochrome P450 monooxygenase ORF5.